The primary structure comprises 472 residues: Argininosuccinate lyase (472 aa).

The protein belongs to the lyase 1 family. Argininosuccinate lyase subfamily.

The protein resides in the cytoplasm. The enzyme catalyses 2-(N(omega)-L-arginino)succinate = fumarate + L-arginine. It participates in amino-acid biosynthesis; L-arginine biosynthesis; L-arginine from L-ornithine and carbamoyl phosphate: step 3/3. The polypeptide is Argininosuccinate lyase (Mycobacterium avium (strain 104)).